Reading from the N-terminus, the 224-residue chain is Large ribosomal subunit protein bL25 (224 aa).

The tract at residues 190 to 224 is disordered; it reads EPAPAAEGAAPAEGAAAAAAGGKPAAKTAKPAAKK.

Belongs to the bacterial ribosomal protein bL25 family. CTC subfamily. As to quaternary structure, part of the 50S ribosomal subunit; part of the 5S rRNA/L5/L18/L25 subcomplex. Contacts the 5S rRNA. Binds to the 5S rRNA independently of L5 and L18.

Its function is as follows. This is one of the proteins that binds to the 5S RNA in the ribosome where it forms part of the central protuberance. The sequence is that of Large ribosomal subunit protein bL25 from Variovorax paradoxus (strain S110).